Here is a 1070-residue protein sequence, read N- to C-terminus: Protocadherin-8 (1070 aa).

A signal peptide spans 1–29 (MSPAKRWGSPCLFPLQLFSLCWVLSVAQS). 6 Cadherin domains span residues 30–135 (KTVR…APRF), 136–245 (PRAQ…SPAF), 247–354 (QGAV…APEI), 393–497 (QEAG…APIF), 498–609 (TKPV…SPIL), and 615–721 (ANGS…VPAS). The Extracellular segment spans residues 30–747 (KTVRYSTFEE…SGPSLQWDTP (718 aa)). A glycan (N-linked (GlcNAc...) asparagine) is linked at N616. Low complexity predominate over residues 716-725 (SAVPASSGSP). The interval 716-740 (SAVPASSGSPEHSRPPGSRLAPSGP) is disordered. Residues 748–768 (LIVIIVLAGSCTLLLAAIIAI) form a helical membrane-spanning segment. Over 769-1070 (ATTCNRRKKE…SPKKGINENV (302 aa)) the chain is Cytoplasmic. Disordered regions lie at residues 777–859 (KEVR…TGES), 906–928 (REAE…DSDS), and 1046–1070 (IGVP…NENV). Composition is skewed to basic and acidic residues over residues 780–790 (RKGGALREERP) and 906–921 (REAE…KGDS). S1053 is modified (phosphoserine).

In terms of assembly, the N-terminal extracellular domain forms homophilic interactions; these interactions activate p38 MAPK via TAOK2 and trigger endocytosis. Interacts with CDH2; this interaction may lead to CDH2 cointernalization. Interacts with CDH11. Interacts with TAOK2.

It is found in the cell membrane. The protein localises to the cell projection. The protein resides in the dendrite. It localises to the presynaptic cell membrane. Its subcellular location is the postsynaptic cell membrane. Functionally, calcium-dependent cell-adhesion protein. May play a role in activity-induced synaptic reorganization underlying long term memory. Could be involved in CDH2 internalization through TAOK2/p38 MAPK pathway. In hippocampal neurons, may play a role in the down-regulation of dendritic spines, maybe through its action on CDH2 endocytosis. The sequence is that of Protocadherin-8 (Pcdh8) from Mus musculus (Mouse).